The chain runs to 313 residues: HPr kinase/phosphorylase (313 aa).

Active-site residues include H141 and K162. An ATP-binding site is contributed by 156–163 (GKSGIGKS). Residue S163 coordinates Mg(2+). D180 (proton acceptor; for phosphorylation activity. Proton donor; for dephosphorylation activity) is an active-site residue. Residues 203 to 212 (IEIRGIGIFD) are important for the catalytic mechanism of both phosphorylation and dephosphorylation. Residue E204 participates in Mg(2+) binding. R247 is an active-site residue. The tract at residues 268 to 273 (PVSAGR) is important for the catalytic mechanism of dephosphorylation.

Belongs to the HPrK/P family. As to quaternary structure, homohexamer. The cofactor is Mg(2+).

The enzyme catalyses [HPr protein]-L-serine + ATP = [HPr protein]-O-phospho-L-serine + ADP + H(+). It catalyses the reaction [HPr protein]-O-phospho-L-serine + phosphate + H(+) = [HPr protein]-L-serine + diphosphate. In terms of biological role, catalyzes the ATP- as well as the pyrophosphate-dependent phosphorylation of a specific serine residue in HPr, a phosphocarrier protein of the phosphoenolpyruvate-dependent sugar phosphotransferase system (PTS). HprK/P also catalyzes the pyrophosphate-producing, inorganic phosphate-dependent dephosphorylation (phosphorolysis) of seryl-phosphorylated HPr (P-Ser-HPr). The two antagonistic activities of HprK/P are regulated by several intracellular metabolites, which change their concentration in response to the absence or presence of rapidly metabolisable carbon sources (glucose, fructose, etc.) in the growth medium. Therefore, by controlling the phosphorylation state of HPr, HPrK/P is a sensor enzyme that plays a major role in the regulation of carbon metabolism and sugar transport: it mediates carbon catabolite repression (CCR), and regulates PTS-catalyzed carbohydrate uptake and inducer exclusion. In Mycoplasma mycoides subsp. mycoides SC (strain CCUG 32753 / NCTC 10114 / PG1), this protein is HPr kinase/phosphorylase.